Reading from the N-terminus, the 214-residue chain is Orotate phosphoribosyltransferase (214 aa).

Lys26 contributes to the 5-phospho-alpha-D-ribose 1-diphosphate binding site. 34 to 35 contributes to the orotate binding site; it reads FF. 5-phospho-alpha-D-ribose 1-diphosphate contacts are provided by residues 72–73, Arg99, Lys100, Lys103, His105, and 124–132; these read YK and DDVITAGTA. Orotate contacts are provided by Thr128 and Arg156.

Belongs to the purine/pyrimidine phosphoribosyltransferase family. PyrE subfamily. As to quaternary structure, homodimer. Requires Mg(2+) as cofactor.

The catalysed reaction is orotidine 5'-phosphate + diphosphate = orotate + 5-phospho-alpha-D-ribose 1-diphosphate. It functions in the pathway pyrimidine metabolism; UMP biosynthesis via de novo pathway; UMP from orotate: step 1/2. Catalyzes the transfer of a ribosyl phosphate group from 5-phosphoribose 1-diphosphate to orotate, leading to the formation of orotidine monophosphate (OMP). The sequence is that of Orotate phosphoribosyltransferase from Actinobacillus succinogenes (strain ATCC 55618 / DSM 22257 / CCUG 43843 / 130Z).